The primary structure comprises 257 residues: Ribonuclease HII (257 aa).

One can recognise an RNase H type-2 domain in the interval 71-257 (SLIAGIDEVG…TSFEPIKSML (187 aa)). Positions 77, 78, and 172 each coordinate a divalent metal cation.

This sequence belongs to the RNase HII family. Mn(2+) is required as a cofactor. Requires Mg(2+) as cofactor.

The protein localises to the cytoplasm. The enzyme catalyses Endonucleolytic cleavage to 5'-phosphomonoester.. Endonuclease that specifically degrades the RNA of RNA-DNA hybrids. This chain is Ribonuclease HII, found in Streptococcus uberis (strain ATCC BAA-854 / 0140J).